The chain runs to 161 residues: RNA pyrophosphohydrolase (161 aa).

The region spanning 6–149 (GFRPNVGIIL…KRDVYRKAMV (144 aa)) is the Nudix hydrolase domain. Positions 38–59 (GGIQFGETPEQALFRELREEIG) match the Nudix box motif.

It belongs to the Nudix hydrolase family. RppH subfamily. It depends on a divalent metal cation as a cofactor.

Accelerates the degradation of transcripts by removing pyrophosphate from the 5'-end of triphosphorylated RNA, leading to a more labile monophosphorylated state that can stimulate subsequent ribonuclease cleavage. This Acinetobacter baumannii (strain AB307-0294) protein is RNA pyrophosphohydrolase.